The following is a 747-amino-acid chain: AMP deaminase 1 (747 aa).

Thr81 bears the Phosphothreonine mark. Residue Ser85 is modified to Phosphoserine. At Tyr216 the chain carries Phosphotyrosine. Zn(2+) is bound by residues His303 and His305. Substrate-binding positions include His305 and 374–379 (KFNDKY). Ser441 bears the Phosphoserine mark. His572 lines the Zn(2+) pocket. Substrate is bound at residue Glu575. The Proton acceptor role is filled by His594. Asp649 is a Zn(2+) binding site. 650–653 (DPMQ) lines the substrate pocket.

The protein belongs to the metallo-dependent hydrolases superfamily. Adenosine and AMP deaminases family. Homotetramer. It depends on Zn(2+) as a cofactor.

It carries out the reaction AMP + H2O + H(+) = IMP + NH4(+). Its pathway is purine metabolism; IMP biosynthesis via salvage pathway; IMP from AMP: step 1/1. In terms of biological role, AMP deaminase plays a critical role in energy metabolism. In Rattus norvegicus (Rat), this protein is AMP deaminase 1.